We begin with the raw amino-acid sequence, 224 residues long: A-type ATP synthase subunit D (224 aa).

A compositionally biased stretch (basic and acidic residues) spans 200–209 (KKVKDKKEAQ). Residues 200–224 (KKVKDKKEAQEEAADEAAAAESTGA) are disordered. A compositionally biased stretch (low complexity) spans 215 to 224 (EAAAAESTGA).

Belongs to the V-ATPase D subunit family. As to quaternary structure, has multiple subunits with at least A(3), B(3), C, D, E, F, H, I and proteolipid K(x).

Its subcellular location is the cell membrane. In terms of biological role, component of the A-type ATP synthase that produces ATP from ADP in the presence of a proton gradient across the membrane. This is A-type ATP synthase subunit D from Halobacterium salinarum (strain ATCC 29341 / DSM 671 / R1).